The sequence spans 241 residues: Phosphoadenosine 5'-phosphosulfate reductase (241 aa).

Cys-235 (nucleophile; cysteine thiosulfonate intermediate) is an active-site residue.

It belongs to the PAPS reductase family. CysH subfamily.

It localises to the cytoplasm. It carries out the reaction [thioredoxin]-disulfide + sulfite + adenosine 3',5'-bisphosphate + 2 H(+) = [thioredoxin]-dithiol + 3'-phosphoadenylyl sulfate. It functions in the pathway sulfur metabolism; hydrogen sulfide biosynthesis; sulfite from sulfate: step 3/3. Functionally, catalyzes the formation of sulfite from phosphoadenosine 5'-phosphosulfate (PAPS) using thioredoxin as an electron donor. In Xanthomonas oryzae pv. oryzae (strain MAFF 311018), this protein is Phosphoadenosine 5'-phosphosulfate reductase.